The primary structure comprises 501 residues: Glucose-6-phosphate exchanger SLC37A2 (501 aa).

Residues 19–39 (SWFRGLILLLTFLIYACYHMS) traverse the membrane as a helical segment. N53, N62, and N68 each carry an N-linked (GlcNAc...) asparagine glycan. A run of 5 helical transmembrane segments spans residues 88-108 (GGVDNAFLIAYAIGMFISGVF), 118-138 (LSAGMLLSGLFTSLFGLGYFW), 145-165 (YFVVIQVCNGLVQTTGWPSVV), 189-209 (SVGNILGSLIAGIWVNGQWGL), and 210-230 (SFIVPGIITAVMGVITFLFLI). A disordered region spans residues 240 to 262 (PPQHHGEPAENQDNPEDPGNSPC). 6 helical membrane-spanning segments follow: residues 302–322 (LCLLFAKLVSYTFLYWLPLYI), 334–354 (GDLSTLFDVGGIIGGIVAGLV), 362–382 (ATTCCVMLILAAPMMFLYNYI), 391–411 (IVMLIICGGLVNGPYALITTA), 434–454 (AIIDGTGSIGAALGPLLAGLI), and 462–482 (VFYMLISADVLACLLLCRLVY).

This sequence belongs to the major facilitator superfamily. Organophosphate:Pi antiporter (OPA) (TC 2.A.1.4) family. Detected in intestine and pancreas. Lower expression is also detected in liver and kidney.

The protein resides in the endoplasmic reticulum membrane. The catalysed reaction is D-glucose 6-phosphate(in) + phosphate(out) = D-glucose 6-phosphate(out) + phosphate(in). Inhibited by vanadate but not by chlorogenic acid. Its function is as follows. Inorganic phosphate and glucose-6-phosphate antiporter. May transport cytoplasmic glucose-6-phosphate into the lumen of the endoplasmic reticulum and translocate inorganic phosphate into the opposite direction. Independent of a lumenal glucose-6-phosphatase. May not play a role in homeostatic regulation of blood glucose levels. This chain is Glucose-6-phosphate exchanger SLC37A2, found in Homo sapiens (Human).